The sequence spans 651 residues: Carboxypeptidase S1 homolog A (651 aa).

The signal sequence occupies residues 1-19; sequence MHLATGLAVALPFIGAASA. The cysteines at positions 50 and 121 are disulfide-linked. Asn-77, Asn-125, Asn-128, Asn-161, Asn-184, and Asn-202 each carry an N-linked (GlcNAc...) asparagine glycan. Ser-238 is an active-site residue. 5 N-linked (GlcNAc...) asparagine glycosylation sites follow: Asn-260, Asn-299, Asn-308, Asn-347, and Asn-410. Disulfide bonds link Cys-325–Cys-361 and Cys-332–Cys-354. Asp-458 is a catalytic residue. Residue Cys-461 coordinates substrate. 2 N-linked (GlcNAc...) asparagine glycosylation sites follow: Asn-474 and Asn-504. His-515 is a catalytic residue. Glu-516 contributes to the substrate binding site. A disordered region spans residues 604–630; it reads KSPAGKKQGPPPTSTSPPSPTSSSEGS. A compositionally biased stretch (pro residues) spans 612–623; sequence GPPPTSTSPPSP. Ser-625 is lipidated: GPI-anchor amidated serine. Residues 626-651 constitute a propeptide, removed in mature form; the sequence is SSEGSVKEFSVSVLGVSVLAAITFFL.

This sequence belongs to the peptidase S10 family.

Its subcellular location is the cell membrane. It catalyses the reaction Preferential release of a C-terminal arginine or lysine residue.. Its function is as follows. Extracellular serine carboxypeptidase that contributes to pathogenicity. The chain is Carboxypeptidase S1 homolog A (SCPA) from Arthroderma otae (strain ATCC MYA-4605 / CBS 113480) (Microsporum canis).